We begin with the raw amino-acid sequence, 177 residues long: ATP synthase subunit delta (177 aa).

This sequence belongs to the ATPase delta chain family. In terms of assembly, F-type ATPases have 2 components, F(1) - the catalytic core - and F(0) - the membrane proton channel. F(1) has five subunits: alpha(3), beta(3), gamma(1), delta(1), epsilon(1). F(0) has three main subunits: a(1), b(2) and c(10-14). The alpha and beta chains form an alternating ring which encloses part of the gamma chain. F(1) is attached to F(0) by a central stalk formed by the gamma and epsilon chains, while a peripheral stalk is formed by the delta and b chains.

It localises to the cell inner membrane. Its function is as follows. F(1)F(0) ATP synthase produces ATP from ADP in the presence of a proton or sodium gradient. F-type ATPases consist of two structural domains, F(1) containing the extramembraneous catalytic core and F(0) containing the membrane proton channel, linked together by a central stalk and a peripheral stalk. During catalysis, ATP synthesis in the catalytic domain of F(1) is coupled via a rotary mechanism of the central stalk subunits to proton translocation. This protein is part of the stalk that links CF(0) to CF(1). It either transmits conformational changes from CF(0) to CF(1) or is implicated in proton conduction. The polypeptide is ATP synthase subunit delta (Shewanella oneidensis (strain ATCC 700550 / JCM 31522 / CIP 106686 / LMG 19005 / NCIMB 14063 / MR-1)).